The chain runs to 456 residues: Probable hexose phosphate transport protein (456 aa).

11 helical membrane passes run 34 to 54 (IFYSMFFGYVFFYFTRKSFTF), 70 to 90 (LGIIGSTLYITYGISKFVSGV), 113 to 133 (IFFGLSSTVPLFVLFWGINGW), 161 to 181 (VWSTSHNIGGALIPVLTGIAI), 185 to 205 (GWRGAMFIPGIICIIMGFILI), 257 to 277 (YVLSNKWLWFLSFASFFIYVV), 302 to 322 (LCVSLFEIGGLFGMLLAGWLS), 331 to 351 (GPMNVVFSLGLLFSILGLWGT), 362 to 382 (AFLFIIGFFLFGPQMMIGLAA), 394 to 414 (ASGFTGWFAYFGAAFAGYPLG), and 421 to 441 (GWHGFFVALLACALIALLFFL).

This sequence belongs to the major facilitator superfamily. Organophosphate:Pi antiporter (OPA) (TC 2.A.1.4) family.

The protein localises to the cell membrane. Transport protein for sugar phosphate uptake. This Chlamydia muridarum (strain MoPn / Nigg) protein is Probable hexose phosphate transport protein.